A 216-amino-acid polypeptide reads, in one-letter code: GTP cyclohydrolase 1 2 (216 aa).

Belongs to the GTP cyclohydrolase I family. In terms of assembly, homomer.

It carries out the reaction GTP + H2O = 7,8-dihydroneopterin 3'-triphosphate + formate + H(+). Its pathway is cofactor biosynthesis; 7,8-dihydroneopterin triphosphate biosynthesis; 7,8-dihydroneopterin triphosphate from GTP: step 1/1. The sequence is that of GTP cyclohydrolase 1 2 (folE2) from Nostoc sp. (strain PCC 7120 / SAG 25.82 / UTEX 2576).